Here is a 248-residue protein sequence, read N- to C-terminus: UPF0736 protein BC_1176 (248 aa).

It belongs to the UPF0736 family.

This chain is UPF0736 protein BC_1176, found in Bacillus cereus (strain ATCC 14579 / DSM 31 / CCUG 7414 / JCM 2152 / NBRC 15305 / NCIMB 9373 / NCTC 2599 / NRRL B-3711).